The chain runs to 424 residues: Imidazolonepropionase (424 aa).

Fe(3+) is bound by residues histidine 84 and histidine 86. Positions 84 and 86 each coordinate Zn(2+). Residues arginine 93, tyrosine 156, and histidine 189 each coordinate 4-imidazolone-5-propanoate. An N-formimidoyl-L-glutamate-binding site is contributed by tyrosine 156. Position 254 (histidine 254) interacts with Fe(3+). Histidine 254 lines the Zn(2+) pocket. Residue glutamate 257 participates in 4-imidazolone-5-propanoate binding. A Fe(3+)-binding site is contributed by aspartate 328. A Zn(2+)-binding site is contributed by aspartate 328. Asparagine 330 and glycine 332 together coordinate N-formimidoyl-L-glutamate. Residue serine 333 participates in 4-imidazolone-5-propanoate binding.

The protein belongs to the metallo-dependent hydrolases superfamily. HutI family. It depends on Zn(2+) as a cofactor. Fe(3+) serves as cofactor.

It is found in the cytoplasm. It carries out the reaction 4-imidazolone-5-propanoate + H2O = N-formimidoyl-L-glutamate. Its pathway is amino-acid degradation; L-histidine degradation into L-glutamate; N-formimidoyl-L-glutamate from L-histidine: step 3/3. Catalyzes the hydrolytic cleavage of the carbon-nitrogen bond in imidazolone-5-propanoate to yield N-formimidoyl-L-glutamate. It is the third step in the universal histidine degradation pathway. This Geobacillus kaustophilus (strain HTA426) protein is Imidazolonepropionase.